Here is a 110-residue protein sequence, read N- to C-terminus: Parvalbumin alpha (110 aa).

Residue Ser-2 is modified to N-acetylserine. Residues Ser-2 and Ser-24 each carry the phosphoserine modification. 2 EF-hand domains span residues Lys-39–Asp-74 and Leu-78–Ser-110. Positions 52, 54, 56, 58, 60, 63, 91, 93, 95, 97, and 102 each coordinate Ca(2+).

This sequence belongs to the parvalbumin family.

In terms of biological role, in muscle, parvalbumin is thought to be involved in relaxation after contraction. It binds two calcium ions. This is Parvalbumin alpha (PVALB) from Bos taurus (Bovine).